The sequence spans 141 residues: Large ribosomal subunit protein uL16c (141 aa).

Residues 1-17 (MLSPRRTKYRKQHRGRL) show a composition bias toward basic residues. The segment at 1-20 (MLSPRRTKYRKQHRGRLKGT) is disordered.

Belongs to the universal ribosomal protein uL16 family. As to quaternary structure, part of the 50S ribosomal subunit.

The protein localises to the plastid. It localises to the chloroplast. This is Large ribosomal subunit protein uL16c from Staurastrum punctulatum (Green alga).